The chain runs to 291 residues: Ribosomal RNA small subunit methyltransferase H (291 aa).

S-adenosyl-L-methionine contacts are provided by residues 31–33 (GGY), D49, F76, D97, and Q104.

This sequence belongs to the methyltransferase superfamily. RsmH family.

Its subcellular location is the cytoplasm. It catalyses the reaction cytidine(1402) in 16S rRNA + S-adenosyl-L-methionine = N(4)-methylcytidine(1402) in 16S rRNA + S-adenosyl-L-homocysteine + H(+). In terms of biological role, specifically methylates the N4 position of cytidine in position 1402 (C1402) of 16S rRNA. The protein is Ribosomal RNA small subunit methyltransferase H of Anaplasma marginale (strain Florida).